A 479-amino-acid polypeptide reads, in one-letter code: Sulfate adenylyltransferase subunit 1 (479 aa).

One can recognise a tr-type G domain in the interval 25 to 239 (KSLLRFLTCG…EVLETVDIQR (215 aa)). A G1 region spans residues 34–41 (GSVDDGKS). 34–41 (GSVDDGKS) is a GTP binding site. The segment at 92 to 96 (GITID) is G2. The G3 stretch occupies residues 113–116 (DTPG). Residues 113-117 (DTPGH) and 168-171 (NKMD) each bind GTP. The tract at residues 168–171 (NKMD) is G4. Residues 206-208 (SAL) are G5.

It belongs to the TRAFAC class translation factor GTPase superfamily. Classic translation factor GTPase family. CysN/NodQ subfamily. In terms of assembly, heterodimer composed of CysD, the smaller subunit, and CysN.

The catalysed reaction is sulfate + ATP + H(+) = adenosine 5'-phosphosulfate + diphosphate. It functions in the pathway sulfur metabolism; hydrogen sulfide biosynthesis; sulfite from sulfate: step 1/3. Functionally, with CysD forms the ATP sulfurylase (ATPS) that catalyzes the adenylation of sulfate producing adenosine 5'-phosphosulfate (APS) and diphosphate, the first enzymatic step in sulfur assimilation pathway. APS synthesis involves the formation of a high-energy phosphoric-sulfuric acid anhydride bond driven by GTP hydrolysis by CysN coupled to ATP hydrolysis by CysD. In Salmonella typhimurium (strain LT2 / SGSC1412 / ATCC 700720), this protein is Sulfate adenylyltransferase subunit 1.